The following is a 1148-amino-acid chain: Envelopment polyprotein (1148 aa).

The signal sequence occupies residues 1 to 23 (MGELSPVCLCLLLQGLLLCNTGA). Residues 24–496 (ARNLNELKME…PGLHGWATML (473 aa)) lie on the Lumenal side of the membrane. 6 disulfides stabilise this stretch: cysteine 34/cysteine 159, cysteine 68/cysteine 165, cysteine 117/cysteine 136, cysteine 141/cysteine 146, cysteine 183/cysteine 193, and cysteine 218/cysteine 257. An N-linked (GlcNAc...) asparagine; by host glycan is attached at asparagine 142. Asparagine 357 carries an N-linked (GlcNAc...) asparagine; by host glycan. 4 cysteine pairs are disulfide-bonded: cysteine 386–cysteine 445, cysteine 390–cysteine 399, cysteine 415–cysteine 434, and cysteine 462–cysteine 485. Asparagine 409 carries N-linked (GlcNAc...) asparagine; by host glycosylation. The helical transmembrane segment at 497-517 (LLLTFCFGWVLIPTITMILLK) threads the bilayer. Residues 518–637 (ILIAFAYLCS…LSLFRYRSRF (120 aa)) lie on the Cytoplasmic side of the membrane. Residues 526-543 (CSKYNTDSKFRILIEKVK) form a binding to the ribonucleoprotein region. CCHC-type zinc fingers lie at residues 555-575 (CEVCQYECETAKELESHRKSC) and 580-601 (CPYCLNPSEATTSALQAHFKVC). Binding to the ribonucleoprotein regions lie at residues 598 to 615 (FKVCKLTSRFQENLRKSL), 602 to 613 (KLTSRFQENLRK), and 621 to 635 (MQGCYRTLSLFRYRS). The ITAM domain occupies 621-644 (MQGCYRTLSLFRYRSRFFVGLVWC). The YxxL signature appears at 625–628 (YRTL). A helical transmembrane segment spans residues 638–658 (FVGLVWCVLLVLELIVWAASA). At 659 to 1115 (ETQNLNAGWT…WILGVLNGNW (457 aa)) the chain is on the lumenal side. 8 cysteine pairs are disulfide-bonded: cysteine 745–cysteine 780, cysteine 749–cysteine 787, cysteine 761–cysteine 894, cysteine 775–cysteine 905, cysteine 790–cysteine 913, cysteine 816–cysteine 825, cysteine 833–cysteine 842, and cysteine 873–cysteine 877. The fusion loop stretch occupies residues 767 to 787 (YEYETGWGCNPPDCPGVGTGC). Asparagine 937 carries N-linked (GlcNAc...) asparagine; by host glycosylation. Cystine bridges form between cysteine 979-cysteine 1009, cysteine 1002-cysteine 1054, cysteine 1019-cysteine 1024, cysteine 1055-cysteine 1060, and cysteine 1094-cysteine 1098. A helical membrane pass occupies residues 1116–1136 (MVVAVLVVLLILSILLFTLCC). Binding to the ribonucleoprotein regions lie at residues 1131 to 1143 (LFTLCCPRRPSYR) and 1131 to 1148 (LFTLCCPRRPSYRKEHKP). Residues 1137–1148 (PRRPSYRKEHKP) lie on the Cytoplasmic side of the membrane.

It belongs to the hantavirus envelope glycoprotein family. As to quaternary structure, homodimer. Homotetramer; forms heterotetrameric Gn-Gc spikes in the pre-fusion conformation. Interacts (via C-terminus) with the nucleoprotein. Interacts with host TUFM; this interaction contributes to the virus-induced degradation of mitochondria by autophagy, which leads to degradation of host MAVS and inhibition of type I interferon (IFN) responses. Interacts with host MAP1LC3B; this interaction contributes to the virus-induced degradation of mitochondria by autophagy, which leads to degradation of host MAVS and inhibition of type I interferon (IFN) responses. In terms of assembly, homodimer. Homotetramer; forms heterotetrameric Gn-Gc spikes in the pre-fusion conformation. Homotrimer; forms homotrimer in the post-fusion conformation at acidic pH. Interacts (via C-terminus) with the nucleoprotein. In terms of processing, envelope polyprotein precursor is quickly cleaved in vivo just after synthesis, presumably by host signal peptidase.

The protein resides in the virion membrane. The protein localises to the host cell surface. It localises to the host Golgi apparatus membrane. It is found in the host endoplasmic reticulum membrane. Its subcellular location is the host mitochondrion. Forms homotetramers with glycoprotein C at the surface of the virion. Attaches the virion to host cell receptors including integrin ITGAV/ITGB3. This attachment induces virion internalization predominantly through clathrin-dependent endocytosis. Mediates the assembly and budding of infectious virus particles through its interaction with the nucleocapsid protein and the viral genome. May dysregulate normal immune and endothelial cell responses through an ITAM motif. Translocates to mitochondria, binds to host TUFM and recruits MAP1LC3B. These interactions induce mitochondrial autophagy and therefore destruction of host MAVS leading to inhibition of type I interferon (IFN) responses. Concomitant breakdown of glycoprotein N is apparently prevented by the nucleoprotein that may inhibit Gn-stimulated autophagosome-lysosome fusion. Interacts with the viral genomic RNA. In terms of biological role, forms homotetramers with glycoprotein N at the surface of the virion. Attaches the virion to host cell receptors including integrin ITGAV/ITGB3. This attachment induces virion internalization predominantly through clathrin-dependent endocytosis. Class II fusion protein that promotes fusion of viral membrane with host endosomal membrane after endocytosis of the virion. The chain is Envelopment polyprotein (GP) from Homo sapiens (Human).